Reading from the N-terminus, the 379-residue chain is Homoserine O-succinyltransferase (379 aa).

In terms of domain architecture, AB hydrolase-1 spans 51–360; sequence NAVLICHALS…DAPQGHDAFL (310 aa). Catalysis depends on S157, which acts as the Nucleophile. Substrate is bound at residue R227. Active-site residues include D323 and H356. D357 is a substrate binding site.

Belongs to the AB hydrolase superfamily. MetX family. Homodimer.

The protein resides in the cytoplasm. The enzyme catalyses L-homoserine + succinyl-CoA = O-succinyl-L-homoserine + CoA. The protein operates within amino-acid biosynthesis; L-methionine biosynthesis via de novo pathway; O-succinyl-L-homoserine from L-homoserine: step 1/1. Transfers a succinyl group from succinyl-CoA to L-homoserine, forming succinyl-L-homoserine. This is Homoserine O-succinyltransferase from Pseudomonas syringae pv. tomato (strain ATCC BAA-871 / DC3000).